We begin with the raw amino-acid sequence, 950 residues long: Glycine dehydrogenase (decarboxylating) (950 aa).

Residue Lys-698 is modified to N6-(pyridoxal phosphate)lysine.

It belongs to the GcvP family. As to quaternary structure, the glycine cleavage system is composed of four proteins: P, T, L and H. The cofactor is pyridoxal 5'-phosphate.

The enzyme catalyses N(6)-[(R)-lipoyl]-L-lysyl-[glycine-cleavage complex H protein] + glycine + H(+) = N(6)-[(R)-S(8)-aminomethyldihydrolipoyl]-L-lysyl-[glycine-cleavage complex H protein] + CO2. In terms of biological role, the glycine cleavage system catalyzes the degradation of glycine. The P protein binds the alpha-amino group of glycine through its pyridoxal phosphate cofactor; CO(2) is released and the remaining methylamine moiety is then transferred to the lipoamide cofactor of the H protein. The chain is Glycine dehydrogenase (decarboxylating) from Neisseria meningitidis serogroup A / serotype 4A (strain DSM 15465 / Z2491).